Consider the following 185-residue polypeptide: Photosystem I assembly protein Ycf4 (185 aa).

2 helical membrane passes run 24 to 44 (YIIG…SISS) and 58 to 78 (ALLF…ANLL).

It belongs to the Ycf4 family.

Its subcellular location is the cellular thylakoid membrane. Its function is as follows. Seems to be required for the assembly of the photosystem I complex. This Prochlorococcus marinus (strain MIT 9215) protein is Photosystem I assembly protein Ycf4.